We begin with the raw amino-acid sequence, 342 residues long: tRNA N6-adenosine threonylcarbamoyltransferase (342 aa).

The Fe cation site is built by histidine 114 and histidine 118. Residues 136-140, aspartate 169, glycine 182, aspartate 186, and asparagine 275 each bind substrate; that span reads LVSGG. Aspartate 301 provides a ligand contact to Fe cation.

The protein belongs to the KAE1 / TsaD family. Requires Fe(2+) as cofactor.

Its subcellular location is the cytoplasm. It catalyses the reaction L-threonylcarbamoyladenylate + adenosine(37) in tRNA = N(6)-L-threonylcarbamoyladenosine(37) in tRNA + AMP + H(+). In terms of biological role, required for the formation of a threonylcarbamoyl group on adenosine at position 37 (t(6)A37) in tRNAs that read codons beginning with adenine. Is involved in the transfer of the threonylcarbamoyl moiety of threonylcarbamoyl-AMP (TC-AMP) to the N6 group of A37, together with TsaE and TsaB. TsaD likely plays a direct catalytic role in this reaction. In Streptococcus pyogenes serotype M4 (strain MGAS10750), this protein is tRNA N6-adenosine threonylcarbamoyltransferase.